The primary structure comprises 210 residues: MADS-box protein AGL42 (210 aa).

Residues 1–61 (MVRGKIEMKK…GRLYEFSSSD (61 aa)) enclose the MADS-box domain. The region spanning 87-177 (LQQLKQEASH…HQKNVINPWR (91 aa)) is the K-box domain.

As to expression, expressed in quiescent center (QC) cells of root tips. Expressed at the base of the petiole of cotyledons and leaves, in flower buds, petals, sepals and abscission zone of flowers and siliques.

The protein resides in the nucleus. Functionally, MADS-box transcription factor that acts with AGL71 and AGL72 in the control of flowering time. Promotes flowering at the shoot apical and axillary meristems. Seems to act through a gibberellin-dependent pathway. Interacts genetically with SOC1 and its expression is directly regulated by SOC1. Plays a role in controlling flower organ senescence and abscission by repressing ethylene responses and regulating the expression of BOP2 and IDA. This Arabidopsis thaliana (Mouse-ear cress) protein is MADS-box protein AGL42 (AGL42).